We begin with the raw amino-acid sequence, 98 residues long: MNAKILVIKVGQVETLTFSDGSQYESAIRKKVVPSVKIHSLGAEGNDVGLKKHHGGVDKALFFMSADSFNELNALLNKDFSLYGYCDIRRKFCRVRLE.

The region spanning 30–98 (KKVVPSVKIH…RRKFCRVRLE (69 aa)) is the MOSC domain.

This is an uncharacterized protein from Haemophilus influenzae (strain ATCC 51907 / DSM 11121 / KW20 / Rd).